A 421-amino-acid polypeptide reads, in one-letter code: Meiotic fizzy-related protein 1 (421 aa).

Positions 79–107 (DTPDRKSYSLSPISPQSQDMLRQPQKPKR) are disordered. Residues 86–98 (YSLSPISPQSQDM) show a composition bias toward polar residues. 7 WD repeats span residues 123-160 (KNDF…VVQL), 164-203 (GATN…SVRS), 206-246 (GHSE…EMMK), 247-286 (VHEQ…PLHK), 289-331 (EHTA…LQNK), 333-374 (DTGS…NIAN), and 377-416 (AHTN…PKEE).

The protein belongs to the WD repeat CDC20/Fizzy family. Interacts with mes1.

It is found in the nucleus. Meiosis-specific activator of the anaphase promoting complex/cyclosome (APC/C). Involved in cdc13 degradation. The chain is Meiotic fizzy-related protein 1 (mfr1) from Schizosaccharomyces pombe (strain 972 / ATCC 24843) (Fission yeast).